Reading from the N-terminus, the 1130-residue chain is Sterol regulatory element-binding protein 2 (1130 aa).

The transcriptional activation (acidic) stretch occupies residues 1 to 50 (MDESSELGVLETMETLTELGDELTLGDIDEMLQFVSNQVGEFPDLFSEQL). Over 1-470 (MDESSELGVL…VALGMVDRSR (470 aa)) the chain is Cytoplasmic. The segment at 53–133 (SFPGGGSNGG…PQPQPQPPAQ (81 aa)) is disordered. Positions 55-64 (PGGGSNGGSG) are enriched in gly residues. Residues 83 to 93 (RSFSQVPLSTF) are compositionally biased toward polar residues. Over residues 94–104 (SPSAASPQAPA) the composition is skewed to low complexity. The segment covering 111–131 (PTPPRATPVLQPRPQPQPQPP) has biased composition (pro residues). The segment at 226 to 480 (QQVPVLVQPQ…ILLCVLTFLG (255 aa)) is interaction with LMNA. The region spanning 319–369 (ERRTTHNIIEKRYRSSINDKIIELKDLVMGTDAKMHKSGVLRKAIDYIKYL) is the bHLH domain. Positions 369–390 (LQQVNHKLRQENMVLKLANQKN) are leucine-zipper. Lys453 participates in a covalent cross-link: Glycyl lysine isopeptide (Lys-Gly) (interchain with G-Cter in SUMO2). The chain crosses the membrane as a helical span at residues 471 to 491 (ILLCVLTFLGLSFNPLTSLLQ). At 492-522 (WGGAHNTDQHPYSGSGRSVLSLESGAGGWFD) the chain is on the lumenal side. Residues 523-543 (WMVPTLLLWLVNGVIVLSVFV) form a helical membrane-spanning segment. Topologically, residues 544-1130 (KLLVHGEPVI…LGGGTAIAAS (587 aa)) are cytoplasmic. The residue at position 1087 (Ser1087) is a Phosphoserine.

This sequence belongs to the SREBP family. In terms of assembly, forms a tight complex with SCAP, the SCAP-SREBP complex, in the endoplasmic reticulum membrane and the Golgi apparatus. Interacts with PAQR3; the interaction anchors the SCAP-SREBP complex to the Golgi apparatus in low cholesterol conditions. Interacts (via C-terminal domain) with RNF139. Homodimer; efficient DNA binding of the soluble transcription factor fragment requires dimerization with another bHLH protein. Interacts with LMNA. In terms of processing, processed in the Golgi apparatus, releasing the protein from the membrane. At low cholesterol the SCAP-SREBP complex is recruited into COPII vesicles for export from the endoplasmic reticulum. In the Golgi, complex SREBPs are cleaved sequentially by site-1 (MBTPS1, S1P) and site-2 (MBTPS2, S2P) proteases. The first cleavage by site-1 protease occurs within the luminal loop, the second cleavage by site-2 protease occurs within the first transmembrane domain, releasing the transcription factor from the Golgi membrane. Apoptosis triggers cleavage by the cysteine proteases caspase-3 and caspase-7. Cleavage and activation is induced by mediated cholesterol efflux. Phosphorylated by AMPK, leading to suppress protein processing and nuclear translocation, and repress target gene expression. Post-translationally, SCAP-free SREBF2 is ubiquitinated by the BCR(ARMC5) complex, leading to its degradation. In terms of processing, ubiquitinated; the nuclear form has a rapid turnover and is rapidly ubiquitinated and degraded by the proteasome in the nucleus.

The protein localises to the endoplasmic reticulum membrane. Its subcellular location is the golgi apparatus membrane. It is found in the cytoplasmic vesicle. The protein resides in the COPII-coated vesicle membrane. It localises to the nucleus. With respect to regulation, activation by cleavage is down-regulated upon activation of SIRT3-dependent PRKAA1/AMPK-alpha signaling cascade which leads to inhibition of ATP-consuming lipogenesis to restore cellular energy balance. Functionally, precursor of the transcription factor form (Processed sterol regulatory element-binding protein 2), which is embedded in the endoplasmic reticulum membrane. Low sterol concentrations promote processing of this form, releasing the transcription factor form that translocates into the nucleus and activates transcription of genes involved in cholesterol biosynthesis. Its function is as follows. Key transcription factor that regulates expression of genes involved in cholesterol biosynthesis. Binds to the sterol regulatory element 1 (SRE-1) (5'-ATCACCCCAC-3'). Has dual sequence specificity binding to both an E-box motif (5'-ATCACGTGA-3') and to SRE-1 (5'-ATCACCCCAC-3'). Regulates transcription of genes related to cholesterol synthesis pathway. This chain is Sterol regulatory element-binding protein 2, found in Mus musculus (Mouse).